The chain runs to 61 residues: Small ribosomal subunit protein uS14B (61 aa).

The Zn(2+) site is built by Cys-24, Cys-27, Cys-40, and Cys-43.

The protein belongs to the universal ribosomal protein uS14 family. Zinc-binding uS14 subfamily. Part of the 30S ribosomal subunit. Contacts proteins S3 and S10. The cofactor is Zn(2+).

Its function is as follows. Binds 16S rRNA, required for the assembly of 30S particles and may also be responsible for determining the conformation of the 16S rRNA at the A site. This chain is Small ribosomal subunit protein uS14B, found in Limosilactobacillus reuteri (strain DSM 20016) (Lactobacillus reuteri).